Here is a 376-residue protein sequence, read N- to C-terminus: Carbapenem antibiotics biosynthesis protein CarD (376 aa).

The protein belongs to the proline oxidase family.

The protein operates within antibiotic biosynthesis; carbapenem biosynthesis. This Pectobacterium carotovorum subsp. carotovorum (Erwinia carotovora subsp. carotovora) protein is Carbapenem antibiotics biosynthesis protein CarD (carD).